The chain runs to 338 residues: MKEAFLKACRGIRTDYTPVWFMRQAGRYMPEYQKLRQKYDFLTMCKTPEIAAEVTLQPVKVLGVDAAILFSDILIPLEAMGLKIEFIDDKGPQVLPNIRTVADLEILGELNLEKIGFVFDAIRILINELNVPLIGFAASPFTLATYVIEGGSTKEFVNTKRFMFLEPEGFHKLMSLFTKATQKYLNEQIRAGVHAVQIFDTWAGILSPFDYESFVKPYVKRLIESLKTVPVIYFSSNTAGLINHLKELNADVLSIDWRIDIKDATDLLKNKPLQGNLDPLTLLGSDEELFKRVEKVLIGARGAKSHIFNLGHGVNINTSVDKLKKLVDFVHEFKFMED.

Residues 23-27, aspartate 72, tyrosine 146, threonine 201, and histidine 312 each bind substrate; that span reads RQAGR.

The protein belongs to the uroporphyrinogen decarboxylase family. As to quaternary structure, homodimer.

Its subcellular location is the cytoplasm. It catalyses the reaction uroporphyrinogen III + 4 H(+) = coproporphyrinogen III + 4 CO2. It functions in the pathway porphyrin-containing compound metabolism; protoporphyrin-IX biosynthesis; coproporphyrinogen-III from 5-aminolevulinate: step 4/4. In terms of biological role, catalyzes the decarboxylation of four acetate groups of uroporphyrinogen-III to yield coproporphyrinogen-III. This chain is Uroporphyrinogen decarboxylase, found in Thermodesulfovibrio yellowstonii (strain ATCC 51303 / DSM 11347 / YP87).